The primary structure comprises 401 residues: Imidazolonepropionase (401 aa).

Residues H66 and H68 each contribute to the Fe(3+) site. Zn(2+)-binding residues include H66 and H68. Residues R75, Y138, and H171 each contribute to the 4-imidazolone-5-propanoate site. Y138 contributes to the N-formimidoyl-L-glutamate binding site. H236 contributes to the Fe(3+) binding site. Residue H236 participates in Zn(2+) binding. Q239 lines the 4-imidazolone-5-propanoate pocket. D311 contacts Fe(3+). D311 is a binding site for Zn(2+). Positions 313 and 315 each coordinate N-formimidoyl-L-glutamate. T316 provides a ligand contact to 4-imidazolone-5-propanoate.

The protein belongs to the metallo-dependent hydrolases superfamily. HutI family. Requires Zn(2+) as cofactor. Fe(3+) is required as a cofactor.

It is found in the cytoplasm. It catalyses the reaction 4-imidazolone-5-propanoate + H2O = N-formimidoyl-L-glutamate. Its pathway is amino-acid degradation; L-histidine degradation into L-glutamate; N-formimidoyl-L-glutamate from L-histidine: step 3/3. Its function is as follows. Catalyzes the hydrolytic cleavage of the carbon-nitrogen bond in imidazolone-5-propanoate to yield N-formimidoyl-L-glutamate. It is the third step in the universal histidine degradation pathway. This Pseudomonas fluorescens (strain ATCC BAA-477 / NRRL B-23932 / Pf-5) protein is Imidazolonepropionase.